The primary structure comprises 206 residues: Large ribosomal subunit protein uL4 (206 aa).

The interval 44–80 is disordered; sequence KRAGTHSVKTRSTISGGGAKPWRQKGTGRARSGSNRS.

Belongs to the universal ribosomal protein uL4 family. In terms of assembly, part of the 50S ribosomal subunit.

One of the primary rRNA binding proteins, this protein initially binds near the 5'-end of the 23S rRNA. It is important during the early stages of 50S assembly. It makes multiple contacts with different domains of the 23S rRNA in the assembled 50S subunit and ribosome. In terms of biological role, forms part of the polypeptide exit tunnel. This Oleidesulfovibrio alaskensis (strain ATCC BAA-1058 / DSM 17464 / G20) (Desulfovibrio alaskensis) protein is Large ribosomal subunit protein uL4.